The sequence spans 503 residues: ATP synthase subunit alpha, chloroplastic (503 aa).

170–177 (GDRQTGKT) provides a ligand contact to ATP.

The protein belongs to the ATPase alpha/beta chains family. As to quaternary structure, F-type ATPases have 2 components, CF(1) - the catalytic core - and CF(0) - the membrane proton channel. CF(1) has five subunits: alpha(3), beta(3), gamma(1), delta(1), epsilon(1). CF(0) has four main subunits: a, b, b' and c.

The protein localises to the plastid. It localises to the chloroplast thylakoid membrane. It carries out the reaction ATP + H2O + 4 H(+)(in) = ADP + phosphate + 5 H(+)(out). Functionally, produces ATP from ADP in the presence of a proton gradient across the membrane. The alpha chain is a regulatory subunit. The chain is ATP synthase subunit alpha, chloroplastic from Gracilaria tenuistipitata var. liui (Red alga).